Consider the following 218-residue polypeptide: Thiopurine S-methyltransferase (218 aa).

Tryptophan 10, leucine 45, glutamate 66, and arginine 123 together coordinate S-adenosyl-L-methionine.

It belongs to the class I-like SAM-binding methyltransferase superfamily. TPMT family.

The protein resides in the cytoplasm. The enzyme catalyses S-adenosyl-L-methionine + a thiopurine = S-adenosyl-L-homocysteine + a thiopurine S-methylether.. In Azotobacter vinelandii (strain DJ / ATCC BAA-1303), this protein is Thiopurine S-methyltransferase.